Here is a 152-residue protein sequence, read N- to C-terminus: Deoxyuridine 5'-triphosphate nucleotidohydrolase (152 aa).

Residues 72–74 (RSG), Asn-85, and 89–91 (TVD) contribute to the substrate site.

This sequence belongs to the dUTPase family. Mg(2+) serves as cofactor.

The catalysed reaction is dUTP + H2O = dUMP + diphosphate + H(+). It participates in pyrimidine metabolism; dUMP biosynthesis; dUMP from dCTP (dUTP route): step 2/2. In terms of biological role, this enzyme is involved in nucleotide metabolism: it produces dUMP, the immediate precursor of thymidine nucleotides and it decreases the intracellular concentration of dUTP so that uracil cannot be incorporated into DNA. In Nitrobacter winogradskyi (strain ATCC 25391 / DSM 10237 / CIP 104748 / NCIMB 11846 / Nb-255), this protein is Deoxyuridine 5'-triphosphate nucleotidohydrolase.